Consider the following 217-residue polypeptide: Pyridoxine/pyridoxamine 5'-phosphate oxidase (217 aa).

Residues 13–16 and Lys-71 each bind substrate; that span reads RREY. FMN is bound by residues 66-71, 81-82, Arg-87, Lys-88, and Gln-110; these read RIVLLK and YT. Substrate contacts are provided by Tyr-128, Arg-132, and Ser-136. FMN is bound by residues 145-146 and Trp-190; that span reads QS. 196–198 lines the substrate pocket; sequence RLH. Position 200 (Arg-200) interacts with FMN.

This sequence belongs to the pyridoxamine 5'-phosphate oxidase family. As to quaternary structure, homodimer. FMN is required as a cofactor.

It catalyses the reaction pyridoxamine 5'-phosphate + O2 + H2O = pyridoxal 5'-phosphate + H2O2 + NH4(+). The catalysed reaction is pyridoxine 5'-phosphate + O2 = pyridoxal 5'-phosphate + H2O2. It functions in the pathway cofactor metabolism; pyridoxal 5'-phosphate salvage; pyridoxal 5'-phosphate from pyridoxamine 5'-phosphate: step 1/1. Its pathway is cofactor metabolism; pyridoxal 5'-phosphate salvage; pyridoxal 5'-phosphate from pyridoxine 5'-phosphate: step 1/1. Functionally, catalyzes the oxidation of either pyridoxine 5'-phosphate (PNP) or pyridoxamine 5'-phosphate (PMP) into pyridoxal 5'-phosphate (PLP). This is Pyridoxine/pyridoxamine 5'-phosphate oxidase from Yersinia enterocolitica serotype O:8 / biotype 1B (strain NCTC 13174 / 8081).